The chain runs to 1383 residues: MTSYSFTEKKRIRKDFGKQRSILEVPFLLAIQVDSYREFLQEDVESTKRKDLGLHAALKSVFPISSYSGNAALEYVGYKLGQPVFDERECRQRGMSYGAPLRVTVRLVIYDRESSTKAIKYVKEQEVYLGEIPLMTGNGTFIVNGTERVIVSQLHRSPGVFFDHDRGKTHSSGKLLYSARIIPYRGSWLDFEFDPKDALFTRIDRRRKLPVSILLRALGYNNEEMLAEFFEINTFHINPDEGVQLELVPERLRGETLNFDLADGDKVIVEAGKRITARHVKQLEAAGVAALAVPDDYLVGRILSHDVVDGSTGELLANANDEISEDQLTAFRKAGVDAVGTLWVNDLDRGPYLSNTLRIDPTKTQLEALVEIYRMMRPGEPPTKEAAQNLFHNLFFTFERYDLSTVGRMKFNRRVGRKDVLGESVLYDKKYFAERNDEESKRLVAEHTDTSDILEVIKVLTEIRNGRGVVDDIDHLGNRRVRSVGEMAENVFRVGLVRVERAVKERLSMAESEGLTPQELINAKPVAAAIKEFFGSSQLSQFMDQNNPLSEVTHKRRVSALGPGGLTRERAGFEVRDVHPTHYGRVCTIETPEGPNIGLINSLAVFARTNQYGFLETPYRKVLDGKVSDDVEYLSAIEENEYVIAQANALTDAKNMLTEQFVPCRFQGESLLKPPSEVHFMDVSPMQTVSVAAALVPFLEHDDANRALMGANMQRQAVPTLRSQKPLVGTGIERAVARDSGVTVNALRGGVIEQIDAARIVVKVNEAEIGGGTDAGVDIYNLIKYTRSNQNTCINQRPLVNVGDVIARGDVLADGPSTDIGELALGQNMLIAFMPWNGYNFEDSILLSERVVEEDRYTTIHIEELTCVARDTKLGPEEISADIPNVSEQALNRLDESGVVYIGAEVRAGDIMVGKVTPKGESQLTPEEKLLRAIFGEKASDVKDSSLRVPPGMDGTVIDVQVFTRDGIEKDKRARQIEENEIKRVKKDFDDQFRILEAAIYARLRSQIVGKVANGGANLKKGDSVTDAYLDGLKKSDWFQLRMKDEDAADAIERAQKQIQAHEKEFEARFADKRGKITQGDDLAPGVLKMVKVFLAVKRRIQPGDKMAGRHGNKGVVSNVVPVEDMPYMATGESVDIVLNPLGVPSRMNIGQILEVHLGWAAKGLGRKIQRMLEAQAAVSELRKFLDDIYNHDNAINAQRVDLSQFSDEELLNLGKNLIDGVPMATPVFDGASEAEIKRMLELADLPQSGQTQLYDGRTGEAFDRKTTVGYMHYLKLNHLVDDKMHARSTGPYSLVTQQPLGGKAQFGGQRFGEMEVWALEAYGAAYTLQEMLTVKSDDVQGRNQMYKNIVDGEHEMVAGMPESFNVLVKEIRSLAIHMELEE.

Belongs to the RNA polymerase beta chain family. In terms of assembly, the RNAP catalytic core consists of 2 alpha, 1 beta, 1 beta' and 1 omega subunit. When a sigma factor is associated with the core the holoenzyme is formed, which can initiate transcription.

The enzyme catalyses RNA(n) + a ribonucleoside 5'-triphosphate = RNA(n+1) + diphosphate. Its function is as follows. DNA-dependent RNA polymerase catalyzes the transcription of DNA into RNA using the four ribonucleoside triphosphates as substrates. The chain is DNA-directed RNA polymerase subunit beta from Xanthomonas oryzae pv. oryzae (strain MAFF 311018).